The following is a 297-amino-acid chain: Cell division protein ZipA (297 aa).

A topological domain (periplasmic) is located at residue Met-1. The chain crosses the membrane as a helical span at residues 2–22; sequence EIGLREWLILIGIIVIAGILF. At 23-297 the chain is on the cytoplasmic side; sequence DGWRRMRGGK…FERRALTQKR (275 aa). The disordered stretch occupies residues 48–151; sequence DEEGGSAEVL…AAPASNSVKE (104 aa). Residues 83-92 show a composition bias toward basic and acidic residues; sequence ARDREREPKP. The span at 124-133 shows a compositional bias: acidic residues; that stretch reads LFSDSDDDFA.

Belongs to the ZipA family. Interacts with FtsZ via their C-terminal domains.

The protein resides in the cell inner membrane. In terms of biological role, essential cell division protein that stabilizes the FtsZ protofilaments by cross-linking them and that serves as a cytoplasmic membrane anchor for the Z ring. Also required for the recruitment to the septal ring of downstream cell division proteins. In Pseudomonas putida (strain ATCC 47054 / DSM 6125 / CFBP 8728 / NCIMB 11950 / KT2440), this protein is Cell division protein ZipA.